The following is a 426-amino-acid chain: Serine--tRNA ligase (426 aa).

231-233 provides a ligand contact to L-serine; it reads TAE. 262–264 lines the ATP pocket; sequence RSE. Glu-285 serves as a coordination point for L-serine. 349–352 lines the ATP pocket; that stretch reads EISS. Residue Ser-385 participates in L-serine binding.

Belongs to the class-II aminoacyl-tRNA synthetase family. Type-1 seryl-tRNA synthetase subfamily. Homodimer. The tRNA molecule binds across the dimer.

It localises to the cytoplasm. The enzyme catalyses tRNA(Ser) + L-serine + ATP = L-seryl-tRNA(Ser) + AMP + diphosphate + H(+). It catalyses the reaction tRNA(Sec) + L-serine + ATP = L-seryl-tRNA(Sec) + AMP + diphosphate + H(+). It functions in the pathway aminoacyl-tRNA biosynthesis; selenocysteinyl-tRNA(Sec) biosynthesis; L-seryl-tRNA(Sec) from L-serine and tRNA(Sec): step 1/1. Functionally, catalyzes the attachment of serine to tRNA(Ser). Is also able to aminoacylate tRNA(Sec) with serine, to form the misacylated tRNA L-seryl-tRNA(Sec), which will be further converted into selenocysteinyl-tRNA(Sec). In Lysinibacillus sphaericus (strain C3-41), this protein is Serine--tRNA ligase.